The following is a 392-amino-acid chain: Methylthioribose kinase (392 aa).

ATP is bound by residues asparagine 38, lysine 53, and 107–109; that span reads EDL. Position 225 (aspartate 225) interacts with substrate. 242 to 244 provides a ligand contact to ATP; it reads DPE. Residue arginine 332 coordinates substrate.

This sequence belongs to the methylthioribose kinase family. Homodimer.

The catalysed reaction is 5-(methylsulfanyl)-D-ribose + ATP = 5-(methylsulfanyl)-alpha-D-ribose 1-phosphate + ADP + H(+). It functions in the pathway amino-acid biosynthesis; L-methionine biosynthesis via salvage pathway; S-methyl-5-thio-alpha-D-ribose 1-phosphate from S-methyl-5'-thioadenosine (hydrolase route): step 2/2. Catalyzes the phosphorylation of methylthioribose into methylthioribose-1-phosphate. In Bacillus mycoides (strain KBAB4) (Bacillus weihenstephanensis), this protein is Methylthioribose kinase.